Consider the following 723-residue polypeptide: Threonine--tRNA ligase, mitochondrial (723 aa).

Ser-57 is subject to Phosphoserine. The 63-residue stretch at Arg-64 to Thr-126 folds into the TGS domain.

Belongs to the class-II aminoacyl-tRNA synthetase family. Homodimer.

Its subcellular location is the mitochondrion matrix. The catalysed reaction is tRNA(Thr) + L-threonine + ATP = L-threonyl-tRNA(Thr) + AMP + diphosphate + H(+). Catalyzes the attachment of threonine to tRNA(Thr) in a two-step reaction: threonine is first activated by ATP to form Thr-AMP and then transferred to the acceptor end of tRNA(Thr). Also edits incorrectly charged tRNA(Thr) via its editing domain. This Rattus norvegicus (Rat) protein is Threonine--tRNA ligase, mitochondrial (Tars2).